Here is a 348-residue protein sequence, read N- to C-terminus: Glucokinase (348 aa).

14–19 (GDVGGS) contacts ATP. Positions 327–348 (SDPAPVAAPTHPRGGTAGDMHA) are disordered.

Belongs to the bacterial glucokinase family.

It localises to the cytoplasm. It catalyses the reaction D-glucose + ATP = D-glucose 6-phosphate + ADP + H(+). The sequence is that of Glucokinase from Chromobacterium violaceum (strain ATCC 12472 / DSM 30191 / JCM 1249 / CCUG 213 / NBRC 12614 / NCIMB 9131 / NCTC 9757 / MK).